A 357-amino-acid chain; its full sequence is MPVLPWLAAAATTPVRRSPPLPATPRALLRLPASSFPPWSNCAKSGLPPRGPFATAADTPLGGSLPEPEEERDTLLDGALRAARFRDEESRRPDPLFIDPYAAVLLSLDVASEDKDLLALHLMPSAEHYRLVTRYIDDKLQHFISNSDDLRQIVLLTDGMDTRPYRLSWPRLSVVYDVSPRRVFITASQQLRGAGAKISRNCVVLHTSSESPDLQAGLNKNGFNGNRPSLWVLQGLPLFTFKSLEDLLLVIGNLAMKGSIFIGEVPRFTQWGAATDMASEQDRLENLFFTQGFRVSFVHYEEVAKDVGLGLDSPPEIHGRAIFIAEQLRFSDAQMESFRMHFERIEDDADEDGFEEL.

The N-terminal 53 residues, 1–53 (MPVLPWLAAAATTPVRRSPPLPATPRALLRLPASSFPPWSNCAKSGLPPRGPF), are a transit peptide targeting the chloroplast. Residues 50-71 (RGPFATAADTPLGGSLPEPEEE) are disordered.

Belongs to the methyltransferase superfamily. LCMT family. As to expression, expressed in roots, leaf sheaths, flag leaves and panicles.

The protein localises to the plastid. The protein resides in the chloroplast. The catalysed reaction is N-acetylserotonin + S-adenosyl-L-methionine = melatonin + S-adenosyl-L-homocysteine + H(+). It functions in the pathway aromatic compound metabolism; melatonin biosynthesis; melatonin from serotonin: step 1/2. Functionally, involved in melatonin biosynthesis. Can function as acetylserotonin O-methyltransferase. Catalyzes the transfer of a methyl group onto N-acetylserotonin, producing melatonin (N-acetyl-5-methoxytryptamine). Involved in the regulation of jasmonate- and brassinosteroid-mediated plant growth and defense responses. This is O-methyltransferase 1, chloroplastic from Oryza sativa subsp. japonica (Rice).